A 203-amino-acid polypeptide reads, in one-letter code: Small ribosomal subunit protein uS7 (203 aa).

Residues 1–22 (MSESEAPEPDQPAGAEEATGAK) are disordered.

It belongs to the universal ribosomal protein uS7 family. In terms of assembly, part of the 30S ribosomal subunit.

In terms of biological role, one of the primary rRNA binding proteins, it binds directly to 16S rRNA where it nucleates assembly of the head domain of the 30S subunit. Is located at the subunit interface close to the decoding center. This chain is Small ribosomal subunit protein uS7, found in Halococcus morrhuae (Micrococcus morrhuae).